Reading from the N-terminus, the 466-residue chain is 3-isopropylmalate dehydratase large subunit (466 aa).

The [4Fe-4S] cluster site is built by Cys-347, Cys-407, and Cys-410.

This sequence belongs to the aconitase/IPM isomerase family. LeuC type 1 subfamily. As to quaternary structure, heterodimer of LeuC and LeuD. It depends on [4Fe-4S] cluster as a cofactor.

It catalyses the reaction (2R,3S)-3-isopropylmalate = (2S)-2-isopropylmalate. It participates in amino-acid biosynthesis; L-leucine biosynthesis; L-leucine from 3-methyl-2-oxobutanoate: step 2/4. In terms of biological role, catalyzes the isomerization between 2-isopropylmalate and 3-isopropylmalate, via the formation of 2-isopropylmaleate. The sequence is that of 3-isopropylmalate dehydratase large subunit from Serratia proteamaculans (strain 568).